Here is a 194-residue protein sequence, read N- to C-terminus: Interleukin-18 (194 aa).

Positions 1 to 36 (MAAMSEEGSCVNFKEMMFIDNTLYLIPEDNGDLESD) are excised as a propeptide.

This sequence belongs to the IL-1 family. As to quaternary structure, forms a ternary complex with ligand-binding receptor subunit IL18R1 and signaling receptor subunit IL18RAP at the plasma membrane. Mature IL18 first binds to IL18R1 forming a low affinity binary complex, which then interacts with IL18RAP to form a high affinity ternary complex that signals inside the cell. Interacts with cargo receptor TMED10; the interaction mediates the translocation from the cytoplasm into the ERGIC (endoplasmic reticulum-Golgi intermediate compartment) and thereby secretion. In terms of processing, the pro-IL-18 precursor is processed by CASP1 to yield its mature, active form. The pro-IL-18 precursor is however not processed by Casp4/Casp11 in rodents. The pro-IL-18 precursor features autoinhibitory interactions between the propeptide and the post-cleavage-site region, preventing recognition by the IL18R1 receptor. Processing by CASP1 induces conformational changes to generate critical receptor-binding sites. The mature form is then secreted and released in the extracellular milieu by passing through the gasdermin-D (GSDMD) pore. In contrast, cleavage by CASP3 inactivates IL18.

The protein localises to the cytoplasm. Its subcellular location is the cytosol. The protein resides in the secreted. Its function is as follows. Pro-inflammatory cytokine primarily involved in epithelial barrier repair, polarized T-helper 1 (Th1) cell and natural killer (NK) cell immune responses. Upon binding to IL18R1 and IL18RAP, forms a signaling ternary complex which activates NF-kappa-B, triggering synthesis of inflammatory mediators. Synergizes with IL12/interleukin-12 to induce IFNG synthesis from T-helper 1 (Th1) cells and natural killer (NK) cells. Involved in transduction of inflammation downstream of pyroptosis: its mature form is specifically released in the extracellular milieu by passing through the gasdermin-D (GSDMD) pore. The sequence is that of Interleukin-18 (Il18) from Rattus norvegicus (Rat).